Consider the following 279-residue polypeptide: Large ribosomal subunit protein uL2 (279 aa).

2 disordered regions span residues 34-58 (LRPL…GGGH) and 225-279 (VMNP…KNKR). The segment covering 251-268 (GKPEGRTRRPNKESDKLI) has biased composition (basic and acidic residues). A compositionally biased stretch (basic residues) spans 269–279 (VRRRRTGKNKR).

The protein belongs to the universal ribosomal protein uL2 family. As to quaternary structure, part of the 50S ribosomal subunit. Forms a bridge to the 30S subunit in the 70S ribosome.

Functionally, one of the primary rRNA binding proteins. Required for association of the 30S and 50S subunits to form the 70S ribosome, for tRNA binding and peptide bond formation. It has been suggested to have peptidyltransferase activity; this is somewhat controversial. Makes several contacts with the 16S rRNA in the 70S ribosome. The sequence is that of Large ribosomal subunit protein uL2 from Micrococcus luteus (strain ATCC 4698 / DSM 20030 / JCM 1464 / CCM 169 / CCUG 5858 / IAM 1056 / NBRC 3333 / NCIMB 9278 / NCTC 2665 / VKM Ac-2230) (Micrococcus lysodeikticus).